A 274-amino-acid chain; its full sequence is Undecaprenyl-diphosphatase (274 aa).

The next 7 helical transmembrane spans lie at 4–24, 46–63, 82–102, 109–129, 184–204, 218–238, and 249–269; these read ILLLKALILGIVEGLTEFLPI, LFEIVIQSGAILAVVWEY, KFILNLFVAFLPLAILGLAFG, LFNPVTVASTFILGAFVILWA, ATEFSFFLAIPTLIVATFYQL, MWAVGFVAAFVSAFLCVRWLL, and FAWYRIAFGIVVLATWQFGWV.

This sequence belongs to the UppP family.

It is found in the cell inner membrane. It carries out the reaction di-trans,octa-cis-undecaprenyl diphosphate + H2O = di-trans,octa-cis-undecaprenyl phosphate + phosphate + H(+). Catalyzes the dephosphorylation of undecaprenyl diphosphate (UPP). Confers resistance to bacitracin. The chain is Undecaprenyl-diphosphatase from Dechloromonas aromatica (strain RCB).